The chain runs to 407 residues: Arrestin homolog (407 aa).

This sequence belongs to the arrestin family.

This Locusta migratoria (Migratory locust) protein is Arrestin homolog.